A 377-amino-acid polypeptide reads, in one-letter code: Membrane progestin receptor epsilon (377 aa).

Positions 1–40 (MPRRLQPRGAGTKGPPAPAPAASGAARNSHSAASRDPPAS) are disordered. Residues 1 to 86 (MPRRLQPRGA…VLKPTNETLN (86 aa)) lie on the Cytoplasmic side of the membrane. Positions 9-26 (GAGTKGPPAPAPAASGAA) are enriched in low complexity. Residues 87 to 107 (FWTHFIPLLLFLSKFCRLFFL) traverse the membrane as a helical segment. Residues 108-116 (SGGDVPFHH) are Extracellular-facing. Residues 117–137 (PWLLPLWCYASGVLLTFAMSC) traverse the membrane as a helical segment. Topologically, residues 138-162 (TAHVFSCLSLRLRAAFFYLDYASIS) are cytoplasmic. The helical transmembrane segment at 163-183 (YYGFGSTVAYYYYLLPGLSLL) threads the bilayer. Residues 184–205 (DARVMTPYLQQRLGWHVDCTRL) lie on the Extracellular side of the membrane. A helical membrane pass occupies residues 206-226 (IAAYRALVLPVAFVLAVACTV). Residues 227–243 (ACCKSRTDWCTYPFALR) are Cytoplasmic-facing. A helical membrane pass occupies residues 244–264 (TFVFVMPLSMACPIMLESWLF). The Extracellular portion of the chain corresponds to 265-301 (DLRGENPTLFVHFYRRYFWLVVAAFFNVSKIPERIQP). The chain crosses the membrane as a helical span at residues 302–322 (GLFDIIGHSHQLFHIFTFLSI). The Cytoplasmic segment spans residues 323–343 (YDQVYYVEEGLRQFLQAPPAA). A helical membrane pass occupies residues 344–364 (PTFSGTVGYMLLLVVCLGLVI). Residues 365–377 (RKFLNSSEFCSKK) are Extracellular-facing.

Belongs to the ADIPOR family. In terms of assembly, homodimer. Expression levels vary widely in a range of tissues. Expressed in the brain, at high level in the pituitary gland and also in hypothalamus, limbic system, caudate nucleus accumens, pons and olfactory bulb.

It localises to the cell membrane. In terms of biological role, plasma membrane progesterone (P4) receptor coupled to G proteins. Seems to act through a G(s) mediated pathway. May be involved in regulating rapid P4 signaling in the nervous system. Also binds dehydroepiandrosterone (DHEA), pregnanolone, pregnenolone and allopregnanolone. This is Membrane progestin receptor epsilon from Homo sapiens (Human).